Here is a 355-residue protein sequence, read N- to C-terminus: Anthranilate phosphoribosyltransferase (355 aa).

5-phospho-alpha-D-ribose 1-diphosphate is bound by residues Gly-91, 94-95 (GD), Thr-99, 101-104 (NIST), 119-127 (KHGNRAMSS), and Ala-131. Residue Gly-91 coordinates anthranilate. Ser-103 is a binding site for Mg(2+). Asn-122 is a binding site for anthranilate. Arg-177 lines the anthranilate pocket. Mg(2+) contacts are provided by Asp-234 and Glu-235.

The protein belongs to the anthranilate phosphoribosyltransferase family. As to quaternary structure, homodimer. It depends on Mg(2+) as a cofactor.

The enzyme catalyses N-(5-phospho-beta-D-ribosyl)anthranilate + diphosphate = 5-phospho-alpha-D-ribose 1-diphosphate + anthranilate. It participates in amino-acid biosynthesis; L-tryptophan biosynthesis; L-tryptophan from chorismate: step 2/5. Functionally, participates in the tryptophan-dependent indole-3-acetic acid production, which is a phytohormone released by A.brasilense. Its function is as follows. Catalyzes the transfer of the phosphoribosyl group of 5-phosphorylribose-1-pyrophosphate (PRPP) to anthranilate to yield N-(5'-phosphoribosyl)-anthranilate (PRA). The protein is Anthranilate phosphoribosyltransferase of Azospirillum brasilense.